Here is a 339-residue protein sequence, read N- to C-terminus: DNA-directed RNA polymerase subunit alpha (339 aa).

The interval 1-238 (MVDPIVTKNW…EQLSIFINFD (238 aa)) is alpha N-terminal domain (alpha-NTD). Residues 255–339 (LNENLFRSVD…KAAPQGAPKV (85 aa)) form an alpha C-terminal domain (alpha-CTD) region.

Belongs to the RNA polymerase alpha chain family. As to quaternary structure, homodimer. The RNAP catalytic core consists of 2 alpha, 1 beta, 1 beta' and 1 omega subunit. When a sigma factor is associated with the core the holoenzyme is formed, which can initiate transcription.

It catalyses the reaction RNA(n) + a ribonucleoside 5'-triphosphate = RNA(n+1) + diphosphate. In terms of biological role, DNA-dependent RNA polymerase catalyzes the transcription of DNA into RNA using the four ribonucleoside triphosphates as substrates. This chain is DNA-directed RNA polymerase subunit alpha, found in Anaeromyxobacter sp. (strain Fw109-5).